The primary structure comprises 135 residues: Probable histone H2A.8 (135 aa).

The protein belongs to the histone H2A family. As to quaternary structure, the nucleosome is a histone octamer containing two molecules each of H2A, H2B, H3 and H4 assembled in one H3-H4 heterotetramer and two H2A-H2B heterodimers. The octamer wraps approximately 147 bp of DNA.

It localises to the nucleus. Its subcellular location is the chromosome. In terms of biological role, core component of nucleosome. Nucleosomes wrap and compact DNA into chromatin, limiting DNA accessibility to the cellular machineries which require DNA as a template. Histones thereby play a central role in transcription regulation, DNA repair, DNA replication and chromosomal stability. DNA accessibility is regulated via a complex set of post-translational modifications of histones, also called histone code, and nucleosome remodeling. The protein is Probable histone H2A.8 of Oryza sativa subsp. indica (Rice).